The following is a 148-amino-acid chain: Antitoxin Xre (148 aa).

The protein belongs to the MbcA/ParS/Xre antitoxin family. Homodimer. Forms a complex with cognate toxin Rse.

Its function is as follows. Antitoxin component of a type II toxin-antitoxin (TA) system. Neutralizes the activity of cognate toxin Res. The protein is Antitoxin Xre of Yersinia enterocolitica serotype O:8 / biotype 1B (strain NCTC 13174 / 8081).